The sequence spans 107 residues: Replication initiation control protein YabA (107 aa).

Zn(2+) contacts are provided by histidine 80, cysteine 82, cysteine 97, and cysteine 100.

The protein belongs to the YabA family. In terms of assembly, homotetramer. Interacts with both DnaA and DnaN, acting as a bridge between these two proteins. The cofactor is Zn(2+).

The protein resides in the cytoplasm. Its subcellular location is the nucleoid. Its function is as follows. Involved in control of chromosome replication initiation. Inhibits the cooperative binding of DnaA to the oriC region, thus negatively regulating initiation of chromosome replication. Inhibits the ability of DnaA-ATP to form a helix on DNA; does not disassemble preformed DnaA-DNA helices. Decreases the residence time of DnaA on the chromosome at its binding sites (oriC, replication forks and promoter-binding sites). Tethers DnaA to the replication machinery via the DNA polymerase beta sliding clamp subunit (dnaN). Associates with oriC and other DnaA targets on the chromosome in a DnaA-dependent manner. The chain is Replication initiation control protein YabA from Streptococcus gordonii (strain Challis / ATCC 35105 / BCRC 15272 / CH1 / DL1 / V288).